The chain runs to 95 residues: Co-chaperonin GroES (95 aa).

Belongs to the GroES chaperonin family. In terms of assembly, heptamer of 7 subunits arranged in a ring. Interacts with the chaperonin GroEL.

Its subcellular location is the cytoplasm. Functionally, together with the chaperonin GroEL, plays an essential role in assisting protein folding. The GroEL-GroES system forms a nano-cage that allows encapsulation of the non-native substrate proteins and provides a physical environment optimized to promote and accelerate protein folding. GroES binds to the apical surface of the GroEL ring, thereby capping the opening of the GroEL channel. This is Co-chaperonin GroES from Francisella tularensis subsp. holarctica (strain FTNF002-00 / FTA).